The sequence spans 232 residues: UPF0177 protein in abiGi 5'region (232 aa).

A run of 6 helical transmembrane segments spans residues 12–32 (YLSL…ILAY), 47–67 (VVAT…GILI), 86–106 (LLFL…SYTY), 124–144 (SIQI…APIF), 165–185 (IVSC…LIVY), and 206–226 (ILVH…LQVI).

It belongs to the UPF0177 family.

The protein resides in the cell membrane. Its function is as follows. The function of this protein is currently unknown, but it has been shown that it is not necessary for phage resistance. The sequence is that of UPF0177 protein in abiGi 5'region from Lactococcus lactis subsp. cremoris (Streptococcus cremoris).